A 563-amino-acid chain; its full sequence is Germacrene-A synthase (563 aa).

Mg(2+) is bound by residues Asp-316, Asp-320, Asp-461, and Glu-469. Positions 316 to 320 (DDIYD) match the DDXXD motif motif.

The protein belongs to the terpene synthase family. Tpsa subfamily. It depends on Mg(2+) as a cofactor. In terms of tissue distribution, expressed in young leaves. Detected in trichomes and cones.

It catalyses the reaction (2E,6E)-farnesyl diphosphate = (+)-(R)-germacrene A + diphosphate. It participates in secondary metabolite biosynthesis; terpenoid biosynthesis. Its function is as follows. Sesquiterpene synthase that catalyzes the formation of germacrene A. Can use farnesyl diphosphate as substrate, but not geranyl diphosphate or geranylgeranyl diphosphate. Beta-elemene, the initially measured product in the assay, is derived nonenzymatically from germacrene A. The protein is Germacrene-A synthase of Humulus lupulus (European hop).